The following is a 273-amino-acid chain: MRLYRAQALVLRSRSYGEADRLLTLLTRERGKLSAIAKGVRKPTSRLRAGTQPLTHSQLVLYEGKNLQTVTQAEPVESFAALHGDVVRFSHASSMAELVDRLSPDHSGADLFPLLLTGWHLLSVFPGDLVACLFQLRLLDRLGYCPELSLCLDCGEPVEIADSGPWPAYSPEMGGLVGNCCRHRHSEMGLIAPGALALLRHLLQMDPRDLGRLRVGPKLLRHVSAVLKETIRCRSEGNMRSWSVIESVGRSLTEEPELKAEQTEAEKESQRPR.

Residues 249-273 (GRSLTEEPELKAEQTEAEKESQRPR) are disordered. Basic and acidic residues predominate over residues 252–273 (LTEEPELKAEQTEAEKESQRPR).

This sequence belongs to the RecO family.

Functionally, involved in DNA repair and RecF pathway recombination. The protein is DNA repair protein RecO of Heliobacterium modesticaldum (strain ATCC 51547 / Ice1).